A 119-amino-acid chain; its full sequence is Large ribosomal subunit protein bL20c (119 aa).

Belongs to the bacterial ribosomal protein bL20 family.

The protein localises to the plastid. It localises to the chloroplast. Its function is as follows. Binds directly to 23S ribosomal RNA and is necessary for the in vitro assembly process of the 50S ribosomal subunit. It is not involved in the protein synthesizing functions of that subunit. The protein is Large ribosomal subunit protein bL20c of Saccharum hybrid (Sugarcane).